The chain runs to 318 residues: Phospho-N-acetylmuramoyl-pentapeptide-transferase (318 aa).

The next 10 helical transmembrane spans lie at 5–25 (LKPLVLAAVVTLILGPPVLAF), 50–70 (PTMGGVLFLIGLTVSTLVLAP), 71–91 (PSPLTLSTLILTWGYALIGLV), 115–135 (VLLGLVAGVAAMLWLGRGSVI), 139–159 (VTGWHWDLGWYYPLLAALLLV), 173–193 (GLAAGITLWVALAYGILALTL), 198–218 (LVTFAMALAGGCLGFLVYNFH), 222–242 (VFMGDTGSLALGAAIGFLAIM), 248–268 (VLPVLGGVYVLETLSVILQVV), and 298–318 (VLFFWALAIIMALAGLYLLTI).

Belongs to the glycosyltransferase 4 family. MraY subfamily. Mg(2+) is required as a cofactor.

The protein resides in the cell membrane. The enzyme catalyses UDP-N-acetyl-alpha-D-muramoyl-L-alanyl-gamma-D-glutamyl-meso-2,6-diaminopimeloyl-D-alanyl-D-alanine + di-trans,octa-cis-undecaprenyl phosphate = di-trans,octa-cis-undecaprenyl diphospho-N-acetyl-alpha-D-muramoyl-L-alanyl-D-glutamyl-meso-2,6-diaminopimeloyl-D-alanyl-D-alanine + UMP. It functions in the pathway cell wall biogenesis; peptidoglycan biosynthesis. In terms of biological role, catalyzes the initial step of the lipid cycle reactions in the biosynthesis of the cell wall peptidoglycan: transfers peptidoglycan precursor phospho-MurNAc-pentapeptide from UDP-MurNAc-pentapeptide onto the lipid carrier undecaprenyl phosphate, yielding undecaprenyl-pyrophosphoryl-MurNAc-pentapeptide, known as lipid I. The protein is Phospho-N-acetylmuramoyl-pentapeptide-transferase of Moorella thermoacetica (strain ATCC 39073 / JCM 9320).